A 48-amino-acid polypeptide reads, in one-letter code: Large ribosomal subunit protein bL33A (48 aa).

Belongs to the bacterial ribosomal protein bL33 family.

This chain is Large ribosomal subunit protein bL33A, found in Bacillus anthracis.